Reading from the N-terminus, the 164-residue chain is Large ribosomal subunit protein bL9 (164 aa).

This sequence belongs to the bacterial ribosomal protein bL9 family.

Binds to the 23S rRNA. This chain is Large ribosomal subunit protein bL9, found in Psychrobacter sp. (strain PRwf-1).